Reading from the N-terminus, the 338-residue chain is Glycerol-3-phosphate dehydrogenase [NAD(P)+] (338 aa).

Positions 13, 14, and 108 each coordinate NADPH. Residues Lys108, Gly139, and Ser141 each coordinate sn-glycerol 3-phosphate. Ala143 contributes to the NADPH binding site. Sn-glycerol 3-phosphate contacts are provided by Lys194, Asp247, Ser257, Arg258, and Asn259. Lys194 (proton acceptor) is an active-site residue. Position 258 (Arg258) interacts with NADPH. NADPH-binding residues include Val282 and Glu284.

This sequence belongs to the NAD-dependent glycerol-3-phosphate dehydrogenase family.

It localises to the cytoplasm. The catalysed reaction is sn-glycerol 3-phosphate + NAD(+) = dihydroxyacetone phosphate + NADH + H(+). It carries out the reaction sn-glycerol 3-phosphate + NADP(+) = dihydroxyacetone phosphate + NADPH + H(+). It participates in membrane lipid metabolism; glycerophospholipid metabolism. In terms of biological role, catalyzes the reduction of the glycolytic intermediate dihydroxyacetone phosphate (DHAP) to sn-glycerol 3-phosphate (G3P), the key precursor for phospholipid synthesis. This Streptococcus pneumoniae (strain Taiwan19F-14) protein is Glycerol-3-phosphate dehydrogenase [NAD(P)+].